The following is a 154-amino-acid chain: Ribonuclease H (154 aa).

The RNase H type-1 domain occupies E5–D146. D14, E52, D74, and D138 together coordinate Mg(2+).

This sequence belongs to the RNase H family. In terms of assembly, monomer. Mg(2+) is required as a cofactor.

The protein resides in the cytoplasm. The catalysed reaction is Endonucleolytic cleavage to 5'-phosphomonoester.. Its function is as follows. Endonuclease that specifically degrades the RNA of RNA-DNA hybrids. This is Ribonuclease H from Coxiella burnetii (strain CbuG_Q212) (Coxiella burnetii (strain Q212)).